The primary structure comprises 364 residues: DNA polymerase IV (364 aa).

One can recognise a UmuC domain in the interval 14 to 198 (IIHIDMDAFF…LPVEKFHGVG (185 aa)). Mg(2+) contacts are provided by D18 and D116. E117 is a catalytic residue.

This sequence belongs to the DNA polymerase type-Y family. Monomer. Mg(2+) serves as cofactor.

Its subcellular location is the cytoplasm. It catalyses the reaction DNA(n) + a 2'-deoxyribonucleoside 5'-triphosphate = DNA(n+1) + diphosphate. Functionally, poorly processive, error-prone DNA polymerase involved in untargeted mutagenesis. Copies undamaged DNA at stalled replication forks, which arise in vivo from mismatched or misaligned primer ends. These misaligned primers can be extended by PolIV. Exhibits no 3'-5' exonuclease (proofreading) activity. May be involved in translesional synthesis, in conjunction with the beta clamp from PolIII. The polypeptide is DNA polymerase IV (Lactococcus lactis subsp. cremoris (strain MG1363)).